The following is a 290-amino-acid chain: Eukaryotic translation initiation factor 3 subunit G (290 aa).

Residues 1-12 are compositionally biased toward basic and acidic residues; the sequence is MADSKQSNRDWA. 2 disordered regions span residues 1 to 30 and 173 to 192; these read MADSKQSNRDWAADDVDADELPPTTESTDA and AGETGGKYVPPSQRAGATGA. An RRM domain is found at 204 to 285; that stretch reads PTLRVTSLSI…LILEVAWSQP (82 aa).

It belongs to the eIF-3 subunit G family. In terms of assembly, component of the eukaryotic translation initiation factor 3 (eIF-3) complex.

The protein resides in the cytoplasm. Functionally, RNA-binding component of the eukaryotic translation initiation factor 3 (eIF-3) complex, which is involved in protein synthesis of a specialized repertoire of mRNAs and, together with other initiation factors, stimulates binding of mRNA and methionyl-tRNAi to the 40S ribosome. The eIF-3 complex specifically targets and initiates translation of a subset of mRNAs involved in cell proliferation. This subunit can bind 18S rRNA. The chain is Eukaryotic translation initiation factor 3 subunit G from Cryptococcus neoformans var. neoformans serotype D (strain B-3501A) (Filobasidiella neoformans).